We begin with the raw amino-acid sequence, 145 residues long: Hemoglobin fetal subunit beta (145 aa).

One can recognise a Globin domain in the interval 1 to 145; sequence MLSAEEKAAV…VANALAHRYH (145 aa). Positions 62 and 91 each coordinate heme b.

The protein belongs to the globin family. As to quaternary structure, heterotetramer of two alpha chains and two beta chains. Red blood cells.

Involved in oxygen transport from the lung to the various peripheral tissues. The sequence is that of Hemoglobin fetal subunit beta from Bos taurus (Bovine).